A 267-amino-acid chain; its full sequence is L-aspartate dehydrogenase (267 aa).

2 residues coordinate NAD(+): Ala124 and Asn190. The active site involves His218.

It belongs to the L-aspartate dehydrogenase family.

It catalyses the reaction L-aspartate + NADP(+) + H2O = oxaloacetate + NH4(+) + NADPH + H(+). The enzyme catalyses L-aspartate + NAD(+) + H2O = oxaloacetate + NH4(+) + NADH + H(+). It participates in cofactor biosynthesis; NAD(+) biosynthesis; iminoaspartate from L-aspartate (dehydrogenase route): step 1/1. In terms of biological role, specifically catalyzes the NAD or NADP-dependent dehydrogenation of L-aspartate to iminoaspartate. The protein is L-aspartate dehydrogenase of Methanococcus maripaludis (strain C7 / ATCC BAA-1331).